The sequence spans 125 residues: MORF4 family-associated protein 1 (125 aa).

The segment at 76–99 (ESALNHLQGAGGAEPRGPRAEKAD) is disordered. A coiled-coil region spans residues 94-124 (RAEKADEKAQEMAKMAEMLVQLVRRIEKSES).

This sequence belongs to the MORF4 family-associated protein family. Found in a complex composed of MORF4L1, MRFAP1 and RB1. Interacts via its N-terminus with MORF4L1. Interacts with CSTB and MORF4L2. In terms of tissue distribution, widely expressed in all tissues examined and as early as 7 days during embryonic development.

It is found in the nucleus. The protein resides in the cytoplasm. The protein localises to the perinuclear region. The sequence is that of MORF4 family-associated protein 1 from Mus musculus (Mouse).